The chain runs to 172 residues: Adenine phosphoribosyltransferase (172 aa).

The protein belongs to the purine/pyrimidine phosphoribosyltransferase family. As to quaternary structure, homodimer.

It is found in the cytoplasm. The enzyme catalyses AMP + diphosphate = 5-phospho-alpha-D-ribose 1-diphosphate + adenine. It participates in purine metabolism; AMP biosynthesis via salvage pathway; AMP from adenine: step 1/1. Functionally, catalyzes a salvage reaction resulting in the formation of AMP, that is energically less costly than de novo synthesis. This is Adenine phosphoribosyltransferase from Polynucleobacter necessarius subsp. necessarius (strain STIR1).